A 475-amino-acid chain; its full sequence is ATP synthase subunit beta, chloroplastic (475 aa).

An ATP-binding site is contributed by 156–163 (GGAGVGKT).

It belongs to the ATPase alpha/beta chains family. In terms of assembly, F-type ATPases have 2 components, CF(1) - the catalytic core - and CF(0) - the membrane proton channel. CF(1) has five subunits: alpha(3), beta(3), gamma(1), delta(1), epsilon(1). CF(0) has four main subunits: a(1), b(1), b'(1) and c(9-12).

The protein localises to the plastid. Its subcellular location is the chloroplast thylakoid membrane. It catalyses the reaction ATP + H2O + 4 H(+)(in) = ADP + phosphate + 5 H(+)(out). In terms of biological role, produces ATP from ADP in the presence of a proton gradient across the membrane. The catalytic sites are hosted primarily by the beta subunits. The chain is ATP synthase subunit beta, chloroplastic from Trieres chinensis (Marine centric diatom).